A 399-amino-acid polypeptide reads, in one-letter code: Stage III sporulation protein AE (399 aa).

A signal peptide spans 1 to 24; the sequence is MKRFQWVLLLAVLIIAGRAEIVQA. A run of 7 helical transmembrane segments spans residues 104–124, 140–160, 172–192, 209–229, 248–268, 315–335, and 368–388; these read VLANGKLLGTLILLTIFCVIL, AYSIVYMVLIILALNSFHVAI, SFILALIPLLLALLASSGGAV, GLLIQNIVMPLIFLSAILSIV, IAIGALAVFLTIFLGVISVQG, VGILGVAILICIAAFPAIKVL, and IYIFAALAIVSLMFFLSLTVI.

In terms of assembly, interacts with SpoIIIJ and YqjG.

The protein localises to the cell membrane. Required during sporulation for activation of sigma factor SpoIIIG/SigG after engulfment is completed in the prespore. Overexpression in the absence of SpoIIIJ is synthetically lethal. The sequence is that of Stage III sporulation protein AE (spoIIIAE) from Bacillus subtilis (strain 168).